The sequence spans 188 residues: Elongation factor P (188 aa).

K34 carries the post-translational modification N6-(3,6-diaminohexanoyl)-5-hydroxylysine.

Belongs to the elongation factor P family. In terms of processing, may be beta-lysylated on the epsilon-amino group of Lys-34 by the combined action of EpmA and EpmB, and then hydroxylated on the C5 position of the same residue by EpmC (if this protein is present). Lysylation is critical for the stimulatory effect of EF-P on peptide-bond formation. The lysylation moiety may extend toward the peptidyltransferase center and stabilize the terminal 3-CCA end of the tRNA. Hydroxylation of the C5 position on Lys-34 may allow additional potential stabilizing hydrogen-bond interactions with the P-tRNA.

The protein resides in the cytoplasm. The protein operates within protein biosynthesis; polypeptide chain elongation. Involved in peptide bond synthesis. Alleviates ribosome stalling that occurs when 3 or more consecutive Pro residues or the sequence PPG is present in a protein, possibly by augmenting the peptidyl transferase activity of the ribosome. Modification of Lys-34 is required for alleviation. This chain is Elongation factor P, found in Pseudoalteromonas translucida (strain TAC 125).